A 359-amino-acid polypeptide reads, in one-letter code: Transcription elongation factor A N-terminal and central domain-containing protein (359 aa).

Residues 1–82 (MSDKNQIIAR…AKWRGFYKST (82 aa)) enclose the TFIIS N-terminal domain. Residues 84–118 (CKPRQSPKVLHTNANKEESAAVSQDVSQDETSGSS) form a disordered region. Residues 104–118 (AVSQDVSQDETSGSS) show a composition bias toward polar residues. Positions 182 to 298 (VRSKCVELLY…EHCLPQSVDG (117 aa)) constitute a TFIIS central domain.

This is Transcription elongation factor A N-terminal and central domain-containing protein (Tceanc) from Mus musculus (Mouse).